Reading from the N-terminus, the 91-residue chain is Small ribosomal subunit protein uS15 (91 aa).

This sequence belongs to the universal ribosomal protein uS15 family. Part of the 30S ribosomal subunit. Forms a bridge to the 50S subunit in the 70S ribosome, contacting the 23S rRNA.

One of the primary rRNA binding proteins, it binds directly to 16S rRNA where it helps nucleate assembly of the platform of the 30S subunit by binding and bridging several RNA helices of the 16S rRNA. Its function is as follows. Forms an intersubunit bridge (bridge B4) with the 23S rRNA of the 50S subunit in the ribosome. In Legionella pneumophila (strain Corby), this protein is Small ribosomal subunit protein uS15.